The following is a 278-amino-acid chain: Bifunctional protein FolD (278 aa).

NADP(+)-binding positions include 164–166 (GRS) and threonine 228.

This sequence belongs to the tetrahydrofolate dehydrogenase/cyclohydrolase family. Homodimer.

The catalysed reaction is (6R)-5,10-methylene-5,6,7,8-tetrahydrofolate + NADP(+) = (6R)-5,10-methenyltetrahydrofolate + NADPH. The enzyme catalyses (6R)-5,10-methenyltetrahydrofolate + H2O = (6R)-10-formyltetrahydrofolate + H(+). Its pathway is one-carbon metabolism; tetrahydrofolate interconversion. Functionally, catalyzes the oxidation of 5,10-methylenetetrahydrofolate to 5,10-methenyltetrahydrofolate and then the hydrolysis of 5,10-methenyltetrahydrofolate to 10-formyltetrahydrofolate. This is Bifunctional protein FolD from Mycoplasmopsis synoviae (strain 53) (Mycoplasma synoviae).